Here is a 463-residue protein sequence, read N- to C-terminus: MSPQQEPTAQPPRRHRVVIIGSGFGGLNAAKKLKRADVDIKLIARTTHHLFQPLLYQVATGIISEGEIAPPTRVVLRKQRNVQVLLGNVTHIDLAGQCVVSELLGHTYQTPYDSLIVAAGAGQSYFGNDHFAEFAPGMKSIDDALELRGRILSAFEQAERSSDPERRAKLLTFTVVGAGPTGVEMAGQIAELAEHTLKGAFRHIDSTKARVILLDAAPAVLPPMGAKLGQRAAARLQKLGVEIQLGAMVTDVDRNGITVKDSDGTVRRIESACKVWSAGVSASRLGRDLAEQSRVELDRAGRVQVLPDLSIPGYPNVFVVGDMAAVEGVPGVAQGAIQGAKYVASTIKAELAGANPAEREPFQYFDKGSMATVSRFSAVAKIGPVEFSGFIAWLIWLVLHLAYLIGFKTKITTLLSWTVTFLSTRRGQLTITDQQAFARTRLEQLAELAAEAQGSAASAKVAS.

Residues 21 to 25 (GSGFG) and Val89 each bind FAD. Residue Glu184 is part of the active site. FAD is bound by residues Asp322 and 333–334 (AQ). The helical transmembrane segment at 387-407 (FSGFIAWLIWLVLHLAYLIGF) threads the bilayer.

This sequence belongs to the NADH dehydrogenase family. Requires FAD as cofactor.

The protein resides in the cell inner membrane. It carries out the reaction a quinone + NADH + H(+) = a quinol + NAD(+). The catalysed reaction is a menaquinone + NADH + H(+) = a menaquinol + NAD(+). It catalyses the reaction a ubiquinone + NADH + H(+) = a ubiquinol + NAD(+). Inhibited by phenothiazine analogs. Inhibited by 2-mercapto-quinazolinones. Not inhibited by classic inhibitors of type I NADH dehydrogenase, such as rotenone, piericidin A and pyridaben. Its function is as follows. Alternative, nonproton pumping NADH:quinone oxidoreductase that delivers electrons to the respiratory chain by oxidation of NADH and reduction of quinones. Ndh is probably the main NADH dehydrogenase of M.tuberculosis. The chain is Type II NADH:quinone oxidoreductase Ndh from Mycobacterium tuberculosis (strain ATCC 25618 / H37Rv).